Here is a 3421-residue protein sequence, read N- to C-terminus: Hemocyanin 2 (3421 aa).

The signal sequence occupies residues 1–19 (MWTILALLTATLLFEGAFS). The segment at 20–442 (VDTVVRKNVD…KPPVPVAQAN (423 aa)) is functional unit a (wall). His-62 serves as a coordination point for Cu cation. A disulfide bridge links Cys-68 with Cys-78. Positions 79-81 (CLH) form a cross-link, 2'-(S-cysteinyl)-histidine (Cys-His). The Cu cation site is built by His-81, His-90, His-200, His-204, and His-231. Intrachain disulfides connect Cys-190/Cys-257 and Cys-344/Cys-356. Asn-408 is a glycosylation site (N-linked (GlcNAc...) asparagine). Residues 443-853 (LAVRKNINDL…RADAKDFGHS (411 aa)) are functional unit b (wall). A Cu cation-binding site is contributed by His-483. A disulfide bridge connects residues Cys-489 and Cys-500. Residues 501–503 (CVH) constitute a cross-link (2'-(S-cysteinyl)-histidine (Cys-His)). Cu cation-binding residues include His-503, His-512, His-622, His-626, His-653, and His-894. A disulfide bridge connects residues Cys-612 and Cys-678. The WD 1 repeat unit spans residues 632–673 (SEKYSMSSLHYTAFDPIFYLHHSNVDRLWAIWQALQIRRGKS). The tract at residues 854–1275 (RKIRKAVDSL…DEYREAVTSA (422 aa)) is functional unit c (wall). Cys-900 and Cys-911 are joined by a disulfide. Residues 912 to 914 (CVH) constitute a cross-link (2'-(S-cysteinyl)-histidine (Cys-His)). The Cu cation site is built by His-914, His-923, His-1033, His-1037, and His-1063. 2 disulfide bridges follow: Cys-1023–Cys-1090 and Cys-1180–Cys-1187. A WD 2 repeat occupies 1043–1084 (NEPYSMSSLRYTTYDPIFFLHRSNTDRLWAIWQALQKYRGKP). A glycan (N-linked (GlcNAc...) asparagine) is linked at Asn-1183. Residues 1276–1685 (SHIRKNIRDL…NIYYDGLSQH (410 aa)) are functional unit d (wall). Position 1313 (His-1313) interacts with Cu cation. An intrachain disulfide couples Cys-1319 to Cys-1328. The 2'-(S-cysteinyl)-histidine (Cys-His) cross-link spans 1329–1331 (CVH). Positions 1331 and 1340 each coordinate Cu cation. Residues 1387–1425 (QTFDPNPFFRGHIAFENAVTSRDPQPELWDNKDFYENVM) form a WD 3 repeat. 2 disulfide bridges follow: Cys-1434/Cys-1501 and Cys-1590/Cys-1599. His-1444, His-1448, and His-1475 together coordinate Cu cation. One copy of the WD 4 repeat lies at 1454 to 1495 (RAKYSLSSLDYTAFDPVFFLHHANVDRIWAIWQDLQRYRKKP). Residue Asn-1653 is glycosylated (N-linked (GlcNAc...) asparagine). The tract at residues 1686–2102 (NLVRKEVSSL…HGINVRHVGR (417 aa)) is functional unit e (wall). A Cu cation-binding site is contributed by His-1726. Residues Cys-1732 and Cys-1743 are joined by a disulfide bond. The 2'-(S-cysteinyl)-histidine (Cys-His) cross-link spans 1744–1746 (CLH). His-1746, His-1755, His-1868, His-1872, and His-1899 together coordinate Cu cation. 2 disulfide bridges follow: Cys-1858–Cys-1925 and Cys-2014–Cys-2020. Residues 1878–1919 (SKTHSIGHLHYASYDPLFYIHHSQTDRIWAIWQALQEHRGLS) form a WD 5 repeat. The tract at residues 2103–2522 (NRIRMELSEL…DDHGSDHIAG (420 aa)) is functional unit f (wall). His-2143 contributes to the Cu cation binding site. Cys-2149 and Cys-2159 are joined by a disulfide. Positions 2160–2162 (CIH) form a cross-link, 2'-(S-cysteinyl)-histidine (Cys-His). Cu cation-binding residues include His-2162, His-2171, His-2281, His-2285, and His-2312. A WD 6 repeat occupies 2168–2204 (PHWHRLYTLQMDMALLSHGSAVAIPYWDWTKPISKLP). Intrachain disulfides connect Cys-2271–Cys-2338 and Cys-2425–Cys-2431. A functional unit g (internal arc) region spans residues 2523–2929 (SGVRKDVTSL…SGHDHSERHD (407 aa)). His-2563 serves as a coordination point for Cu cation. Cys-2569 and Cys-2579 are joined by a disulfide. The segment at residues 2580-2582 (CTH) is a cross-link (2'-(S-cysteinyl)-histidine (Cys-His)). Cu cation-binding residues include His-2582, His-2591, His-2691, His-2695, and His-2722. Disulfide bonds link Cys-2681-Cys-2748 and Cys-2835-Cys-2841. The stretch at 2700 to 2742 (GHTPYGMSSLEYTAYDPLFYLHHSNTDRIWAIWQALQKYRGFQ) is one WD 7 repeat. The tract at residues 2898-2927 (PSDRIKSPTIEHHGGDHHGGDTSGHDHSER) is disordered. Residues 2930–3421 (GFFRKEVGSL…VRIHIHIEDE (492 aa)) form a functional unit h (internal slab) region. His-2970 contributes to the Cu cation binding site. Residues Cys-2976 and Cys-2986 are joined by a disulfide bond. Positions 2987–2989 (CVH) form a cross-link, 2'-(S-cysteinyl)-histidine (Cys-His). Cu cation is bound by residues His-2989, His-2998, His-3099, His-3103, and His-3130. Disulfide bonds link Cys-3089–Cys-3156 and Cys-3374–Cys-3407. Residues 3109-3150 (TETYSMSSLAFSAYDPVFMILHSGLDRLWIIWQELQKLRKKP) form a WD 8 repeat.

It belongs to the tyrosinase family. Hemocyanin subfamily. In terms of assembly, homo-didecamer and homo-multidecamer. Post-translationally, probably N-glycosylated. Asn-2489 is buried deeply in the protein which make it inaccessible for sugar attachment. In terms of tissue distribution, hemolymph.

Its subcellular location is the secreted. The protein localises to the extracellular space. In terms of biological role, hemocyanins are copper-containing oxygen carriers occurring freely dissolved in the hemolymph of many mollusks and arthropods. The chain is Hemocyanin 2 from Megathura crenulata (Giant keyhole limpet).